The primary structure comprises 127 residues: Small ribosomal subunit protein bS6 (127 aa).

Residues 96–127 (VTTPSPMMKEEKSRSLTPAAGDEGKPAEAAEA) are disordered. A compositionally biased stretch (basic and acidic residues) spans 117 to 127 (DEGKPAEAAEA).

Belongs to the bacterial ribosomal protein bS6 family.

Binds together with bS18 to 16S ribosomal RNA. The chain is Small ribosomal subunit protein bS6 from Azoarcus sp. (strain BH72).